We begin with the raw amino-acid sequence, 417 residues long: MSNESKICLVNEDSIYYRGYDIKDLTAVSSFEEVSFLLIYGELPTERELIEYRSELQHYRYIPESLKQVLERIPIYAHPIDVLKTACSFYSTISPESKQNDIYRISNRLIGSFPSILFYWYHFSSNGIRINTLTEVNDSFARHFLKLLNRGNNNNINNNNKFTTEQDEEPILEYVKALDVSLILYAEHGIETASTFSCRLSASTGSDVYSCIGSSIGTMKGVLDDGGSSEAVMYLLQPMKSPEDADKKIMKMINNNQRIIGFSNEFDQRTPIIKEWSKQLSIINKNNNNNNNNNNNNNNNNNNNNNNNNSEDDDDDNSLQTISERVEEIMFDVLKVHANVDFYNATVFHQSNIPTLLFSAISVIARTTGWMANIIEQRCQSKNSLPSLIYTGSDPIPFTPINERVYYHNFKIPNSNL.

Residues 284-317 are disordered; sequence NKNNNNNNNNNNNNNNNNNNNNNNNNSEDDDDDN. The segment covering 286–309 has biased composition (low complexity); it reads NNNNNNNNNNNNNNNNNNNNNNNN.

The protein belongs to the citrate synthase family.

The polypeptide is Citrate synthase-related protein DDB_G0287281 (Dictyostelium discoideum (Social amoeba)).